The sequence spans 126 residues: Holo-[acyl-carrier-protein] synthase (126 aa).

Mg(2+) contacts are provided by Asp8 and Glu57.

The protein belongs to the P-Pant transferase superfamily. AcpS family. Mg(2+) is required as a cofactor.

Its subcellular location is the cytoplasm. It catalyses the reaction apo-[ACP] + CoA = holo-[ACP] + adenosine 3',5'-bisphosphate + H(+). Its function is as follows. Transfers the 4'-phosphopantetheine moiety from coenzyme A to a Ser of acyl-carrier-protein. The protein is Holo-[acyl-carrier-protein] synthase of Leptospira interrogans serogroup Icterohaemorrhagiae serovar copenhageni (strain Fiocruz L1-130).